Here is a 109-residue protein sequence, read N- to C-terminus: Flagellar hook-basal body complex protein FliE (109 aa).

A disordered region spans residues 1–38; the sequence is MQAIHNDKSLLSPFSELNTDNRTQREESGSTFKEQKGG. Residues 22-38 are compositionally biased toward basic and acidic residues; that stretch reads RTQREESGSTFKEQKGG.

It belongs to the FliE family.

The protein resides in the bacterial flagellum basal body. The polypeptide is Flagellar hook-basal body complex protein FliE (Helicobacter acinonychis (strain Sheeba)).